A 376-amino-acid chain; its full sequence is 4-hydroxy-3-methylbut-2-enyl diphosphate reductase (376 aa).

Cys-19 serves as a coordination point for [4Fe-4S] cluster. Positions 48 and 99 each coordinate (2E)-4-hydroxy-3-methylbut-2-enyl diphosphate. The dimethylallyl diphosphate site is built by His-48 and His-99. The isopentenyl diphosphate site is built by His-48 and His-99. [4Fe-4S] cluster is bound at residue Cys-121. His-149 is a binding site for (2E)-4-hydroxy-3-methylbut-2-enyl diphosphate. A dimethylallyl diphosphate-binding site is contributed by His-149. His-149 contacts isopentenyl diphosphate. The active-site Proton donor is Glu-151. Thr-208 lines the (2E)-4-hydroxy-3-methylbut-2-enyl diphosphate pocket. Cys-236 provides a ligand contact to [4Fe-4S] cluster. Residues Ser-264, Asn-266, and Ser-307 each contribute to the (2E)-4-hydroxy-3-methylbut-2-enyl diphosphate site. The dimethylallyl diphosphate site is built by Ser-264, Asn-266, and Ser-307. Positions 264, 266, and 307 each coordinate isopentenyl diphosphate.

It belongs to the IspH family. [4Fe-4S] cluster is required as a cofactor.

It carries out the reaction isopentenyl diphosphate + 2 oxidized [2Fe-2S]-[ferredoxin] + H2O = (2E)-4-hydroxy-3-methylbut-2-enyl diphosphate + 2 reduced [2Fe-2S]-[ferredoxin] + 2 H(+). It catalyses the reaction dimethylallyl diphosphate + 2 oxidized [2Fe-2S]-[ferredoxin] + H2O = (2E)-4-hydroxy-3-methylbut-2-enyl diphosphate + 2 reduced [2Fe-2S]-[ferredoxin] + 2 H(+). It participates in isoprenoid biosynthesis; dimethylallyl diphosphate biosynthesis; dimethylallyl diphosphate from (2E)-4-hydroxy-3-methylbutenyl diphosphate: step 1/1. The protein operates within isoprenoid biosynthesis; isopentenyl diphosphate biosynthesis via DXP pathway; isopentenyl diphosphate from 1-deoxy-D-xylulose 5-phosphate: step 6/6. Catalyzes the conversion of 1-hydroxy-2-methyl-2-(E)-butenyl 4-diphosphate (HMBPP) into a mixture of isopentenyl diphosphate (IPP) and dimethylallyl diphosphate (DMAPP). Acts in the terminal step of the DOXP/MEP pathway for isoprenoid precursor biosynthesis. This Treponema pallidum (strain Nichols) protein is 4-hydroxy-3-methylbut-2-enyl diphosphate reductase.